We begin with the raw amino-acid sequence, 741 residues long: Eukaryotic peptide chain release factor GTP-binding subunit (741 aa).

Residues Gln-5–Asn-135 are several sort of repeats. Over residues Gln-59–Gln-161 the composition is skewed to low complexity. Disordered stretches follow at residues Gln-59 to Leu-186 and Ile-199 to Ala-264. Residues Met-162–Asp-311 are charged. 2 stretches are compositionally biased toward basic and acidic residues: residues Asp-166 to Leu-175 and Lys-202 to Val-241. The tr-type G domain maps to Lys-316–Arg-541. Positions Gly-325 to Ser-332 are G1. Gly-325 to Ser-332 serves as a coordination point for GTP. The tract at residues Gly-381–Glu-385 is G2. Thr-399 carries the post-translational modification Phosphothreonine. Residues Asp-402 to Gly-405 are G3. Residues Asp-402 to His-406 and Asn-464 to Asp-467 each bind GTP. The G4 stretch occupies residues Asn-464 to Asp-467. Residues Ser-505–Tyr-507 are G5.

Belongs to the TRAFAC class translation factor GTPase superfamily. Classic translation factor GTPase family. ERF3 subfamily.

The protein localises to the cytoplasm. In terms of biological role, involved in translation termination. Stimulates the activity of ERF1. Binds guanine nucleotides. This is Eukaryotic peptide chain release factor GTP-binding subunit (SUP2) from Ogataea pini (Yeast).